We begin with the raw amino-acid sequence, 449 residues long: tRNA modification GTPase MnmE (449 aa).

Residues R24, E85, and R124 each contribute to the (6S)-5-formyl-5,6,7,8-tetrahydrofolate site. Positions 220–369 (GIRTAIAGPP…LEEAIIQAFS (150 aa)) constitute a TrmE-type G domain. Residue N230 coordinates K(+). GTP is bound by residues 230-235 (NVGKSS), 249-255 (SNIAGTT), and 274-277 (DTAG). Residue S234 coordinates Mg(2+). Residues S249, I251, and T254 each contribute to the K(+) site. Residue T255 coordinates Mg(2+). Residue K449 coordinates (6S)-5-formyl-5,6,7,8-tetrahydrofolate.

This sequence belongs to the TRAFAC class TrmE-Era-EngA-EngB-Septin-like GTPase superfamily. TrmE GTPase family. Homodimer. Heterotetramer of two MnmE and two MnmG subunits. K(+) serves as cofactor.

It is found in the cytoplasm. In terms of biological role, exhibits a very high intrinsic GTPase hydrolysis rate. Involved in the addition of a carboxymethylaminomethyl (cmnm) group at the wobble position (U34) of certain tRNAs, forming tRNA-cmnm(5)s(2)U34. The polypeptide is tRNA modification GTPase MnmE (Akkermansia muciniphila (strain ATCC BAA-835 / DSM 22959 / JCM 33894 / BCRC 81048 / CCUG 64013 / CIP 107961 / Muc)).